Reading from the N-terminus, the 450-residue chain is Transcription factor AP-2 gamma (450 aa).

Residue K10 forms a Glycyl lysine isopeptide (Lys-Gly) (interchain with G-Cter in SUMO) linkage. Disordered stretches follow at residues 13 to 63 (EDCE…FPPP) and 90 to 126 (LHQP…GLLP). Residues 59–64 (YFPPPY) carry the PPxY motif motif. The segment covering 95–110 (PTGSQQQAWPGRQSQE) has biased composition (polar residues). S252 carries the post-translational modification Phosphoserine; by PKA. The tract at residues 293 to 424 (RRKAAHVTLL…YIKEALIVID (132 aa)) is H-S-H (helix-span-helix), dimerization. The tract at residues 431–450 (GDQSPADSNKTLEKMEKHRK) is disordered. S434 is modified (phosphoserine). The segment covering 440–450 (KTLEKMEKHRK) has biased composition (basic and acidic residues).

This sequence belongs to the AP-2 family. Binds DNA as a dimer. Can form homodimers or heterodimers with other AP-2 family members. Interacts with WWOX. Interacts with UBE2I. Interacts with KCTD1; this interaction represses transcription activation. Interacts with CITED2 (via C-terminus); the interaction stimulates TFAP2B-transcriptional activity. Interacts with CITED4. Interacts with MTA1. Sumoylated on Lys-10; which inhibits transcriptional activity.

It localises to the nucleus. Functionally, sequence-specific DNA-binding transcription factor that interacts with cellular enhancer elements to regulate transcription of selected genes, and which plays a key role in early embryonic development. AP-2 factors bind to the consensus sequence 5'-GCCNNNGGC-3' and activate genes involved in a large spectrum of important biological functions. TFAP2C plays a key role in early embryonic development by regulating both inner cell mass (ICM) and trophectoderm differentiation. At the 8-cell stage, during morula development, controls expression of cell-polarity genes. Upon trophoblast commitment, binds to late trophectoderm genes in blastocysts together with CDX2, and later to extra-embryonic ectoderm genes together with SOX2. Binds to both closed and open chromatin with other transcription factors. Involved in the MTA1-mediated epigenetic regulation of ESR1 expression in breast cancer. The chain is Transcription factor AP-2 gamma (TFAP2C) from Homo sapiens (Human).